The chain runs to 376 residues: Mitochondrial distribution and morphology protein 34 (376 aa).

The region spanning 1-194 (MSFTFNWPRF…LPGIIHRLSQ (194 aa)) is the SMP-LTD domain. 2 disordered regions span residues 207-249 (SKHP…PKIV) and 286-376 (SVPP…LHPS). Acidic residues predominate over residues 218-230 (EISEPGDYGEEGE). Positions 306–318 (VKAKRKRTYRLGG) are enriched in basic residues. Residues 350 to 362 (MDRYFRSYDDHSR) show a composition bias toward basic and acidic residues.

Belongs to the MDM34 family. As to quaternary structure, component of the ER-mitochondria encounter structure (ERMES) or MDM complex, composed of MMM1, MDM10, MDM12 and MDM34.

It is found in the mitochondrion outer membrane. Component of the ERMES/MDM complex, which serves as a molecular tether to connect the endoplasmic reticulum (ER) and mitochondria. Components of this complex are involved in the control of mitochondrial shape and protein biogenesis, and function in nonvesicular lipid trafficking between the ER and mitochondria. MDM34 is required for the interaction of the ER-resident membrane protein MMM1 and the outer mitochondrial membrane-resident beta-barrel protein MDM10. This Laccaria bicolor (strain S238N-H82 / ATCC MYA-4686) (Bicoloured deceiver) protein is Mitochondrial distribution and morphology protein 34.